A 306-amino-acid chain; its full sequence is Non-specific ribonucleoside hydrolase RihC (306 aa).

Residue histidine 235 is part of the active site.

Belongs to the IUNH family. RihC subfamily.

In terms of biological role, hydrolyzes both purine and pyrimidine ribonucleosides with a broad-substrate specificity. This chain is Non-specific ribonucleoside hydrolase RihC, found in Salmonella enteritidis PT4 (strain P125109).